Consider the following 812-residue polypeptide: Glycerol-3-phosphate acyltransferase (812 aa).

The HXXXXD motif motif lies at Cys-308–Met-313.

It belongs to the GPAT/DAPAT family.

It is found in the cell inner membrane. It carries out the reaction sn-glycerol 3-phosphate + an acyl-CoA = a 1-acyl-sn-glycero-3-phosphate + CoA. It participates in phospholipid metabolism; CDP-diacylglycerol biosynthesis; CDP-diacylglycerol from sn-glycerol 3-phosphate: step 1/3. The polypeptide is Glycerol-3-phosphate acyltransferase (Pseudoalteromonas translucida (strain TAC 125)).